Here is a 142-residue protein sequence, read N- to C-terminus: COA8 family protein CBG23705, mitochondrial (142 aa).

This sequence belongs to the COA8 family.

The protein resides in the mitochondrion inner membrane. Its function is as follows. May be required for cytochrome c complex (COX) assembly and function, COX being the terminal component of the mitochondrial respiratory chain. This Caenorhabditis briggsae protein is COA8 family protein CBG23705, mitochondrial.